The following is a 692-amino-acid chain: Elongation factor G (692 aa).

One can recognise a tr-type G domain in the interval 8 to 282 (AKTRNIGIMA…AVIAYLPSPL (275 aa)). GTP contacts are provided by residues 17-24 (AHVDAGKT), 81-85 (DTPGH), and 135-138 (NKMD).

It belongs to the TRAFAC class translation factor GTPase superfamily. Classic translation factor GTPase family. EF-G/EF-2 subfamily.

The protein localises to the cytoplasm. Functionally, catalyzes the GTP-dependent ribosomal translocation step during translation elongation. During this step, the ribosome changes from the pre-translocational (PRE) to the post-translocational (POST) state as the newly formed A-site-bound peptidyl-tRNA and P-site-bound deacylated tRNA move to the P and E sites, respectively. Catalyzes the coordinated movement of the two tRNA molecules, the mRNA and conformational changes in the ribosome. This is Elongation factor G (fus) from Streptococcus pyogenes serotype M1.